The sequence spans 231 residues: Large ribosomal subunit protein uL1 (231 aa).

It belongs to the universal ribosomal protein uL1 family. Part of the 50S ribosomal subunit.

Functionally, binds directly to 23S rRNA. The L1 stalk is quite mobile in the ribosome, and is involved in E site tRNA release. In terms of biological role, protein L1 is also a translational repressor protein, it controls the translation of the L11 operon by binding to its mRNA. The chain is Large ribosomal subunit protein uL1 from Francisella tularensis subsp. tularensis (strain FSC 198).